The chain runs to 187 residues: UPF0232 protein MMAR_0004 (187 aa).

Disordered stretches follow at residues 1 to 77 (MSDD…QPLG) and 166 to 187 (ASPS…DTYG). Positions 14-30 (AARDELSGMDLVRRTLA) are enriched in basic and acidic residues. Residues 31–55 (EARAAARARGQDPGRGFAAGPAPRR) show a composition bias toward low complexity.

This sequence belongs to the UPF0232 family.

The polypeptide is UPF0232 protein MMAR_0004 (Mycobacterium marinum (strain ATCC BAA-535 / M)).